The primary structure comprises 330 residues: Type II methyltransferase M.MthTI (330 aa).

The SAM-dependent MTase C5-type domain occupies 3–328; the sequence is MDIASFFSGA…KKIKKDLEGV (326 aa). Cys73 is an active-site residue.

It belongs to the class I-like SAM-binding methyltransferase superfamily. C5-methyltransferase family.

The enzyme catalyses a 2'-deoxycytidine in DNA + S-adenosyl-L-methionine = a 5-methyl-2'-deoxycytidine in DNA + S-adenosyl-L-homocysteine + H(+). In terms of biological role, a methylase that recognizes the double-stranded sequence 5'-GGCC-3', methylates C-3 on both strands, and protects the DNA from cleavage by the MthTI endonuclease. The polypeptide is Type II methyltransferase M.MthTI (mthTIM) (Methanothermobacter thermautotrophicus (Methanobacterium thermoformicicum)).